The chain runs to 383 residues: NAD(P) transhydrogenase subunit alpha part 1 (383 aa).

Residues Q131–D134, V181, D201–R203, and G231 each bind NAD(+).

It belongs to the AlaDH/PNT family. In terms of assembly, heterotrimer of two alpha chains and a beta (PntB) chain; in Rickettsia, the alpha chain is made of two subunits (PntAA and PntAB) and forms a dimer.

It carries out the reaction NAD(+) + NADPH + H(+)(in) = NADH + NADP(+) + H(+)(out). Its function is as follows. The transhydrogenation between NADH and NADP is coupled to respiration and ATP hydrolysis and functions as a proton pump across the membrane. This is NAD(P) transhydrogenase subunit alpha part 1 (pntAA) from Rickettsia prowazekii (strain Madrid E).